A 377-amino-acid polypeptide reads, in one-letter code: Succinyl-diaminopimelate desuccinylase (377 aa).

His71 contacts Zn(2+). Residue Asp73 is part of the active site. Zn(2+) is bound at residue Asp102. The active-site Proton acceptor is Glu132. Glu133, Glu161, and His346 together coordinate Zn(2+).

Belongs to the peptidase M20A family. DapE subfamily. Homodimer. Zn(2+) is required as a cofactor. It depends on Co(2+) as a cofactor.

It carries out the reaction N-succinyl-(2S,6S)-2,6-diaminopimelate + H2O = (2S,6S)-2,6-diaminopimelate + succinate. It participates in amino-acid biosynthesis; L-lysine biosynthesis via DAP pathway; LL-2,6-diaminopimelate from (S)-tetrahydrodipicolinate (succinylase route): step 3/3. Functionally, catalyzes the hydrolysis of N-succinyl-L,L-diaminopimelic acid (SDAP), forming succinate and LL-2,6-diaminopimelate (DAP), an intermediate involved in the bacterial biosynthesis of lysine and meso-diaminopimelic acid, an essential component of bacterial cell walls. This chain is Succinyl-diaminopimelate desuccinylase, found in Rhizorhabdus wittichii (strain DSM 6014 / CCUG 31198 / JCM 15750 / NBRC 105917 / EY 4224 / RW1) (Sphingomonas wittichii).